We begin with the raw amino-acid sequence, 364 residues long: 3-dehydroquinate synthase (364 aa).

NAD(+)-binding positions include 75-80 (DGEQYK), 109-113 (GVIGD), 133-134 (TT), Lys146, Lys155, and 173-176 (TLDT). Residues Glu188, His251, and His268 each coordinate Zn(2+).

Belongs to the sugar phosphate cyclases superfamily. Dehydroquinate synthase family. Co(2+) is required as a cofactor. The cofactor is Zn(2+). NAD(+) serves as cofactor.

It localises to the cytoplasm. The catalysed reaction is 7-phospho-2-dehydro-3-deoxy-D-arabino-heptonate = 3-dehydroquinate + phosphate. Its pathway is metabolic intermediate biosynthesis; chorismate biosynthesis; chorismate from D-erythrose 4-phosphate and phosphoenolpyruvate: step 2/7. In terms of biological role, catalyzes the conversion of 3-deoxy-D-arabino-heptulosonate 7-phosphate (DAHP) to dehydroquinate (DHQ). The sequence is that of 3-dehydroquinate synthase from Dechloromonas aromatica (strain RCB).